We begin with the raw amino-acid sequence, 683 residues long: MIDQYKHKQLQIGLVSPQQIKAWAKKILPNGEVVGEVTRPSTFHYKTDKPEKDGLFCERIFGPIKSGICACGNSRASVAENEDERFCQKCGVEFVDSRIRRYQMGYIKLACPVTHVWYLKGLPSYIANLLDKPLKKLEGLVYGDFSFARPSAKKPTFLRLRGLFEDEISSCNHSISPFFSTPGFATFRNREIATGAGAIREQLADLDLRIIIENSLVEWKELEDEGYSGDEWEDRKRRIRKVFLIRRMQLAKHFIQTNVEPEWMVLCLLPVLPPELRPIVYRSGDKVVTSDINELYKRVIRRNNNLAYLLKRSELAPADLVMCQEKLVQEAVDTLLDSGSRGQPMRDGHNKVYKSLSDVIEGKEGRFRETLLGKRVDYSGRSVIVVGPSLSLHQCGLPLEIAIKLFQLFVIRDLITKRATSNVRIAKRKIWEKEPIVWEILQEVMRGHPVLLNRAPTLHRLGIQAFQPTLVEGRTICLHPLVCKGFNADFDGDQMAVHLPLSLEAQAEARLLMFSHMNLLSPAIGDPICVPTQDMLIGLYVLTIGNRRGICANRYNSCGNSPNKKINYNNNNYYKYTKDKEPHFSSSYDALGAYRQKRIGLNSPLWLRWKLDQRIVGSREVPIEVQYESFGTYHEIYAHYLVVGNRKKEIRSIYIRTTLGHISFYREIEEAIQGFSRAYSYTI.

Cys-69, Cys-71, Cys-87, and Cys-90 together coordinate Zn(2+). Mg(2+) contacts are provided by Asp-489, Asp-491, and Asp-493.

The protein belongs to the RNA polymerase beta' chain family. RpoC1 subfamily. In terms of assembly, in plastids the minimal PEP RNA polymerase catalytic core is composed of four subunits: alpha, beta, beta', and beta''. When a (nuclear-encoded) sigma factor is associated with the core the holoenzyme is formed, which can initiate transcription. Mg(2+) serves as cofactor. It depends on Zn(2+) as a cofactor.

It is found in the plastid. It localises to the chloroplast. The catalysed reaction is RNA(n) + a ribonucleoside 5'-triphosphate = RNA(n+1) + diphosphate. DNA-dependent RNA polymerase catalyzes the transcription of DNA into RNA using the four ribonucleoside triphosphates as substrates. The polypeptide is DNA-directed RNA polymerase subunit beta' (Sorghum bicolor (Sorghum)).